We begin with the raw amino-acid sequence, 116 residues long: Phosphoribosyl-AMP cyclohydrolase (116 aa).

Mg(2+) is bound at residue aspartate 81. Cysteine 82 contacts Zn(2+). Mg(2+)-binding residues include aspartate 83 and aspartate 85. Residues cysteine 98 and cysteine 105 each coordinate Zn(2+).

The protein belongs to the PRA-CH family. In terms of assembly, homodimer. Requires Mg(2+) as cofactor. Zn(2+) is required as a cofactor.

Its subcellular location is the cytoplasm. It carries out the reaction 1-(5-phospho-beta-D-ribosyl)-5'-AMP + H2O = 1-(5-phospho-beta-D-ribosyl)-5-[(5-phospho-beta-D-ribosylamino)methylideneamino]imidazole-4-carboxamide. It participates in amino-acid biosynthesis; L-histidine biosynthesis; L-histidine from 5-phospho-alpha-D-ribose 1-diphosphate: step 3/9. In terms of biological role, catalyzes the hydrolysis of the adenine ring of phosphoribosyl-AMP. This Mycolicibacterium vanbaalenii (strain DSM 7251 / JCM 13017 / BCRC 16820 / KCTC 9966 / NRRL B-24157 / PYR-1) (Mycobacterium vanbaalenii) protein is Phosphoribosyl-AMP cyclohydrolase.